The sequence spans 317 residues: Protoheme IX farnesyltransferase (317 aa).

Helical transmembrane passes span Phe25–Met45, Pro54–Leu74, Leu117–Phe137, Ile167–Ile189, Leu244–Val264, and Ala281–Leu301.

It belongs to the UbiA prenyltransferase family. Protoheme IX farnesyltransferase subfamily.

Its subcellular location is the cell inner membrane. The catalysed reaction is heme b + (2E,6E)-farnesyl diphosphate + H2O = Fe(II)-heme o + diphosphate. It functions in the pathway porphyrin-containing compound metabolism; heme O biosynthesis; heme O from protoheme: step 1/1. Functionally, converts heme B (protoheme IX) to heme O by substitution of the vinyl group on carbon 2 of heme B porphyrin ring with a hydroxyethyl farnesyl side group. The polypeptide is Protoheme IX farnesyltransferase (Methylobacterium nodulans (strain LMG 21967 / CNCM I-2342 / ORS 2060)).